We begin with the raw amino-acid sequence, 459 residues long: tRNA modification GTPase MnmE (459 aa).

(6S)-5-formyl-5,6,7,8-tetrahydrofolate contacts are provided by Arg23, Glu88, and Arg127. The TrmE-type G domain occupies 223–381; it reads GLDVVIVGKP…LKEYIKDLFF (159 aa). Asn233 is a binding site for K(+). Residues 233-238, 252-258, and 277-280 contribute to the GTP site; these read NVGKSS, TEIPGTT, and DTAG. A Mg(2+)-binding site is contributed by Ser237. K(+)-binding residues include Thr252, Ile254, and Thr257. Thr258 provides a ligand contact to Mg(2+). Lys459 lines the (6S)-5-formyl-5,6,7,8-tetrahydrofolate pocket.

This sequence belongs to the TRAFAC class TrmE-Era-EngA-EngB-Septin-like GTPase superfamily. TrmE GTPase family. Homodimer. Heterotetramer of two MnmE and two MnmG subunits. Requires K(+) as cofactor.

The protein resides in the cytoplasm. Its function is as follows. Exhibits a very high intrinsic GTPase hydrolysis rate. Involved in the addition of a carboxymethylaminomethyl (cmnm) group at the wobble position (U34) of certain tRNAs, forming tRNA-cmnm(5)s(2)U34. In Clostridium tetani (strain Massachusetts / E88), this protein is tRNA modification GTPase MnmE.